Here is a 129-residue protein sequence, read N- to C-terminus: Small ribosomal subunit protein uS11 (129 aa).

This sequence belongs to the universal ribosomal protein uS11 family. As to quaternary structure, part of the 30S ribosomal subunit. Interacts with proteins S7 and S18. Binds to IF-3.

Its function is as follows. Located on the platform of the 30S subunit, it bridges several disparate RNA helices of the 16S rRNA. Forms part of the Shine-Dalgarno cleft in the 70S ribosome. This Staphylococcus carnosus (strain TM300) protein is Small ribosomal subunit protein uS11.